A 376-amino-acid polypeptide reads, in one-letter code: Alanine racemase (376 aa).

The Proton acceptor; specific for D-alanine role is filled by Lys-40. An N6-(pyridoxal phosphate)lysine modification is found at Lys-40. Arg-138 contributes to the substrate binding site. Tyr-270 acts as the Proton acceptor; specific for L-alanine in catalysis. Position 317 (Met-317) interacts with substrate.

It belongs to the alanine racemase family. Pyridoxal 5'-phosphate serves as cofactor.

It catalyses the reaction L-alanine = D-alanine. Its pathway is amino-acid biosynthesis; D-alanine biosynthesis; D-alanine from L-alanine: step 1/1. Catalyzes the interconversion of L-alanine and D-alanine. May also act on other amino acids. The chain is Alanine racemase (alr) from Lactobacillus acidophilus (strain ATCC 700396 / NCK56 / N2 / NCFM).